Reading from the N-terminus, the 469-residue chain is Serine hydroxymethyltransferase, cytosolic (469 aa).

Phosphothreonine is present on Thr20. Phosphoserine is present on Ser26. Lys248 bears the N6-(pyridoxal phosphate)lysine mark. Ser429 bears the Phosphoserine mark. A Glycyl lysine isopeptide (Lys-Gly) (interchain with G-Cter in ubiquitin) cross-link involves residue Lys456.

Belongs to the SHMT family. As to quaternary structure, homotetramer. It depends on pyridoxal 5'-phosphate as a cofactor.

It is found in the cytoplasm. It carries out the reaction (6R)-5,10-methylene-5,6,7,8-tetrahydrofolate + glycine + H2O = (6S)-5,6,7,8-tetrahydrofolate + L-serine. The protein operates within one-carbon metabolism; tetrahydrofolate interconversion. Functionally, interconversion of serine and glycine. The protein is Serine hydroxymethyltransferase, cytosolic of Saccharomyces cerevisiae (strain ATCC 204508 / S288c) (Baker's yeast).